We begin with the raw amino-acid sequence, 545 residues long: Glucose-6-phosphate isomerase (545 aa).

Glutamate 343 functions as the Proton donor in the catalytic mechanism. Active-site residues include histidine 374 and lysine 513.

The protein belongs to the GPI family.

It is found in the cytoplasm. It carries out the reaction alpha-D-glucose 6-phosphate = beta-D-fructose 6-phosphate. The protein operates within carbohydrate biosynthesis; gluconeogenesis. It functions in the pathway carbohydrate degradation; glycolysis; D-glyceraldehyde 3-phosphate and glycerone phosphate from D-glucose: step 2/4. Its function is as follows. Catalyzes the reversible isomerization of glucose-6-phosphate to fructose-6-phosphate. This chain is Glucose-6-phosphate isomerase, found in Methylibium petroleiphilum (strain ATCC BAA-1232 / LMG 22953 / PM1).